The following is a 64-amino-acid chain: Translational regulator CsrA (64 aa).

It belongs to the CsrA/RsmA family. Homodimer; the beta-strands of each monomer intercalate to form a hydrophobic core, while the alpha-helices form wings that extend away from the core.

It is found in the cytoplasm. Functionally, a key translational regulator that binds mRNA to regulate translation initiation and/or mRNA stability. Mediates global changes in gene expression, shifting from rapid growth to stress survival by linking envelope stress, the stringent response and the catabolite repression systems. Usually binds in the 5'-UTR; binding at or near the Shine-Dalgarno sequence prevents ribosome-binding, repressing translation, binding elsewhere in the 5'-UTR can activate translation and/or stabilize the mRNA. Its function is antagonized by small RNA(s). This chain is Translational regulator CsrA, found in Actinobacillus pleuropneumoniae serotype 5b (strain L20).